The chain runs to 1054 residues: Disks large-associated protein 2 (1054 aa).

2 disordered regions span residues Glu32–Arg87 and Ser242–Asn301. A compositionally biased stretch (polar residues) spans Ser242 to Gly255. Positions His267–Glu281 are enriched in basic residues. Low complexity predominate over residues Arg289–Asp299. Ser298, Ser304, Ser386, and Ser452 each carry phosphoserine. Disordered regions lie at residues Gly442 to Glu464 and Tyr609 to Leu666. The span at Val628–Tyr641 shows a compositional bias: polar residues. Residues Ser662, Ser665, Ser668, and Ser715 each carry the phosphoserine modification. A disordered region spans residues Gln719–Gly746. Thr738 is subject to Phosphothreonine. Residues Ser740, Ser771, Ser806, Ser978, and Ser1007 each carry the phosphoserine modification. Basic and acidic residues-rich tracts occupy residues Glu977 to Val987 and Ile1002 to Arg1020. Residues Glu977–Arg1021 are disordered.

The protein belongs to the SAPAP family. As to quaternary structure, interacts with DLG1 and DLG4/PSD-95. Expressed in brain and kidney.

Its subcellular location is the cell membrane. The protein resides in the postsynaptic density. It localises to the synapse. Functionally, may play a role in the molecular organization of synapses and neuronal cell signaling. Could be an adapter protein linking ion channel to the subsynaptic cytoskeleton. May induce enrichment of PSD-95/SAP90 at the plasma membrane. This Homo sapiens (Human) protein is Disks large-associated protein 2.